The primary structure comprises 322 residues: Methionyl-tRNA formyltransferase (322 aa).

(6S)-5,6,7,8-tetrahydrofolate is bound at residue 112 to 115; sequence SLLP.

It belongs to the Fmt family.

The enzyme catalyses L-methionyl-tRNA(fMet) + (6R)-10-formyltetrahydrofolate = N-formyl-L-methionyl-tRNA(fMet) + (6S)-5,6,7,8-tetrahydrofolate + H(+). Its function is as follows. Attaches a formyl group to the free amino group of methionyl-tRNA(fMet). The formyl group appears to play a dual role in the initiator identity of N-formylmethionyl-tRNA by promoting its recognition by IF2 and preventing the misappropriation of this tRNA by the elongation apparatus. The sequence is that of Methionyl-tRNA formyltransferase from Synechococcus sp. (strain JA-3-3Ab) (Cyanobacteria bacterium Yellowstone A-Prime).